A 415-amino-acid polypeptide reads, in one-letter code: Imidazolonepropionase (415 aa).

Fe(3+) contacts are provided by His76 and His78. Residues His76 and His78 each coordinate Zn(2+). Residues Arg85, Tyr148, and His181 each contribute to the 4-imidazolone-5-propanoate site. Residue Tyr148 coordinates N-formimidoyl-L-glutamate. Residue His246 participates in Fe(3+) binding. Residue His246 coordinates Zn(2+). Glu249 is a binding site for 4-imidazolone-5-propanoate. A Fe(3+)-binding site is contributed by Asp320. Asp320 contacts Zn(2+). The N-formimidoyl-L-glutamate site is built by Asn322 and Gly324. 4-imidazolone-5-propanoate is bound at residue Thr325.

It belongs to the metallo-dependent hydrolases superfamily. HutI family. Zn(2+) serves as cofactor. The cofactor is Fe(3+).

It is found in the cytoplasm. It carries out the reaction 4-imidazolone-5-propanoate + H2O = N-formimidoyl-L-glutamate. It participates in amino-acid degradation; L-histidine degradation into L-glutamate; N-formimidoyl-L-glutamate from L-histidine: step 3/3. Functionally, catalyzes the hydrolytic cleavage of the carbon-nitrogen bond in imidazolone-5-propanoate to yield N-formimidoyl-L-glutamate. It is the third step in the universal histidine degradation pathway. The polypeptide is Imidazolonepropionase (Thermoanaerobacter pseudethanolicus (strain ATCC 33223 / 39E) (Clostridium thermohydrosulfuricum)).